The chain runs to 196 residues: Serine recombinase PinQ (196 aa).

In terms of domain architecture, Resolvase/invertase-type recombinase catalytic spans 3–143 (QIFAYCRIST…SGIVRARGAG (141 aa)). Catalysis depends on serine 11, which acts as the O-(5'-phospho-DNA)-serine intermediate.

Belongs to the site-specific recombinase resolvase family.

The chain is Serine recombinase PinQ (pinQ) from Escherichia coli (strain K12).